The sequence spans 169 residues: Allophycocyanin subunit beta-18 (169 aa).

Residue Asn72 is modified to N4-methylasparagine. Cys82 lines the (2R,3E)-phycocyanobilin pocket.

Belongs to the phycobiliprotein family. Heterodimer of an alpha and a beta chain. Post-translationally, contains one covalently linked bilin chromophore.

The protein localises to the plastid. It is found in the chloroplast thylakoid membrane. In terms of biological role, light-harvesting photosynthetic bile pigment-protein from the phycobiliprotein complex. Allophycocyanin has a maximum absorption at approximately 650 nanometers. The protein is Allophycocyanin subunit beta-18 (apcF) of Pyropia yezoensis (Susabi-nori).